The sequence spans 358 residues: Dual-specificity RNA methyltransferase RlmN (358 aa).

The active-site Proton acceptor is the Glu-91. Residues Gly-102–Asp-337 form the Radical SAM core domain. Cys-109 and Cys-342 form a disulfide bridge. [4Fe-4S] cluster-binding residues include Cys-116, Cys-120, and Cys-123. S-adenosyl-L-methionine contacts are provided by residues Gly-169–Glu-170, Ser-201, Ser-223–His-225, and Asn-299. The active-site S-methylcysteine intermediate is Cys-342.

Belongs to the radical SAM superfamily. RlmN family. [4Fe-4S] cluster is required as a cofactor.

It localises to the cytoplasm. The enzyme catalyses adenosine(2503) in 23S rRNA + 2 reduced [2Fe-2S]-[ferredoxin] + 2 S-adenosyl-L-methionine = 2-methyladenosine(2503) in 23S rRNA + 5'-deoxyadenosine + L-methionine + 2 oxidized [2Fe-2S]-[ferredoxin] + S-adenosyl-L-homocysteine. The catalysed reaction is adenosine(37) in tRNA + 2 reduced [2Fe-2S]-[ferredoxin] + 2 S-adenosyl-L-methionine = 2-methyladenosine(37) in tRNA + 5'-deoxyadenosine + L-methionine + 2 oxidized [2Fe-2S]-[ferredoxin] + S-adenosyl-L-homocysteine. Its function is as follows. Specifically methylates position 2 of adenine 2503 in 23S rRNA and position 2 of adenine 37 in tRNAs. m2A2503 modification seems to play a crucial role in the proofreading step occurring at the peptidyl transferase center and thus would serve to optimize ribosomal fidelity. The polypeptide is Dual-specificity RNA methyltransferase RlmN (Lawsonia intracellularis (strain PHE/MN1-00)).